Reading from the N-terminus, the 348-residue chain is Dihydroorotase (348 aa).

Zn(2+)-binding residues include His17 and His19. Substrate contacts are provided by residues His19–Arg21 and Asn45. 3 residues coordinate Zn(2+): Lys103, His140, and His178. Position 103 is an N6-carboxylysine (Lys103). His140 contacts substrate. Leu223 is a substrate binding site. Asp251 is a binding site for Zn(2+). The active site involves Asp251. Residues His255 and Ala267 each coordinate substrate.

It belongs to the metallo-dependent hydrolases superfamily. DHOase family. Class II DHOase subfamily. In terms of assembly, homodimer. Zn(2+) is required as a cofactor.

The catalysed reaction is (S)-dihydroorotate + H2O = N-carbamoyl-L-aspartate + H(+). It participates in pyrimidine metabolism; UMP biosynthesis via de novo pathway; (S)-dihydroorotate from bicarbonate: step 3/3. Functionally, catalyzes the reversible cyclization of carbamoyl aspartate to dihydroorotate. The chain is Dihydroorotase from Salmonella dublin (strain CT_02021853).